A 91-amino-acid polypeptide reads, in one-letter code: Acyl-CoA-binding domain-containing protein 2 (91 aa).

Residues 3 to 88 (LQEEFEEFAE…VKQLLEEASA (86 aa)) enclose the ACB domain. Residues Lys15, 30–34 (YGLYK), Lys52, Lys56, and Tyr75 contribute to the an acyl-CoA site.

The protein belongs to the ACBP family. Highly expressed in leaves. Expressed at low levels in roots and seeds.

The protein resides in the cytoplasm. Its subcellular location is the cytosol. Its function is as follows. Binds medium- and long-chain acyl-CoA esters with high affinity. Can interact in vitro with linolenoyl-CoA. Binds palmitoyl-CoA and linoleoyl-CoA in vitro. Binds phosphatidic acid (PA) and phosphatidylcholine (PC) in vitro. May play a role in the biosynthesis of phospholipids. This is Acyl-CoA-binding domain-containing protein 2 from Oryza sativa subsp. japonica (Rice).